Here is a 432-residue protein sequence, read N- to C-terminus: ATP-dependent RNA helicase SUB2 (432 aa).

The segment covering Met-1–Glu-17 has biased composition (acidic residues). The segment at Met-1–Asp-35 is disordered. The Q motif motif lies at Thr-48–Gln-76. The 176-residue stretch at Ile-79–Ile-254 folds into the Helicase ATP-binding domain. Ala-92–Thr-99 lines the ATP pocket. The DEAD box motif lies at Asp-201–Asp-204. The Helicase C-terminal domain occupies Gly-266–Ser-427.

The protein belongs to the DEAD box helicase family. DECD subfamily.

The protein localises to the nucleus. The catalysed reaction is ATP + H2O = ADP + phosphate + H(+). Functionally, ATP-binding RNA helicase involved in transcription elongation and required for the export of mRNA out of the nucleus. SUB2 also plays a role in pre-mRNA splicing and spliceosome assembly. May be involved in rDNA and telomeric silencing, and maintenance of genome integrity. In Meyerozyma guilliermondii (strain ATCC 6260 / CBS 566 / DSM 6381 / JCM 1539 / NBRC 10279 / NRRL Y-324) (Yeast), this protein is ATP-dependent RNA helicase SUB2 (SUB2).